A 226-amino-acid polypeptide reads, in one-letter code: PKHD-type hydroxylase HNE_2117 (226 aa).

Positions 78–178 constitute a Fe2OG dioxygenase domain; it reads TVLTPRFNRY…RLASFLWTQS (101 aa). Residues His96, Asp98, and His159 each contribute to the Fe cation site. Arg169 provides a ligand contact to 2-oxoglutarate.

It depends on Fe(2+) as a cofactor. L-ascorbate is required as a cofactor.

The sequence is that of PKHD-type hydroxylase HNE_2117 from Hyphomonas neptunium (strain ATCC 15444).